The primary structure comprises 121 residues: Basic phospholipase A2 BbTX-III (121 aa).

Ca(2+)-binding residues include tyrosine 27, glycine 29, and glycine 31. Disulfide bonds link cysteine 28-cysteine 44, cysteine 43-cysteine 95, cysteine 49-cysteine 121, cysteine 50-cysteine 88, cysteine 58-cysteine 82, and cysteine 76-cysteine 86. Histidine 47 is a catalytic residue. Position 48 (aspartate 48) interacts with Ca(2+). Residue aspartate 89 is part of the active site.

It belongs to the phospholipase A2 family. Group II subfamily. D49 sub-subfamily. As to quaternary structure, homodimer; non-covalently linked. Ca(2+) is required as a cofactor. Expressed by the venom gland.

It is found in the secreted. It catalyses the reaction a 1,2-diacyl-sn-glycero-3-phosphocholine + H2O = a 1-acyl-sn-glycero-3-phosphocholine + a fatty acid + H(+). In terms of biological role, snake venom phospholipase A2 (PLA2) that exhibits myotoxin and anticoagulant activity. Displays edema-inducing activities in mouse paw. Also displays cytotoxic activity against some cell lines and myotubes, and antimicrobial activities against E.coli, C.albicans and Leishmania. PLA2 catalyzes the calcium-dependent hydrolysis of the 2-acyl groups in 3-sn-phosphoglycerides. The polypeptide is Basic phospholipase A2 BbTX-III (Bothrops brazili (Brazil's lancehead)).